Here is a 133-residue protein sequence, read N- to C-terminus: Profilin (133 aa).

The protein belongs to the profilin family. Interacts with host TPM1. Interacts with protein A25.

The protein resides in the host cytoplasm. Participates in either intracellular transport of viral proteins or intercellular spread of the virus. Cellular profilins modulate actin filament dynamics (polymerization and depolymerization) via direct binding to actin through an actin-binding domain as well as by modulation of other actin-binding proteins. In contrast to cellular homologs, the poxvirus profilins seem to bind actin only weakly. This chain is Profilin (OPG171), found in Variola virus (isolate Human/India/Ind3/1967) (VARV).